The following is a 602-amino-acid chain: Probable translation initiation factor IF-2 (602 aa).

The region spanning 15 to 230 (LRTPIVAVLG…VLMGLSQRYL (216 aa)) is the tr-type G domain. The tract at residues 24 to 31 (GHVDHGKT) is G1. 24 to 31 (GHVDHGKT) provides a ligand contact to GTP. The tract at residues 49-53 (AITQH) is G2. The segment at 86–89 (DTPG) is G3. Residues 86–90 (DTPGH) and 140–143 (NKID) contribute to the GTP site. The G4 stretch occupies residues 140-143 (NKID). Positions 208–210 (SAE) are G5.

It belongs to the TRAFAC class translation factor GTPase superfamily. Classic translation factor GTPase family. IF-2 subfamily.

Functionally, function in general translation initiation by promoting the binding of the formylmethionine-tRNA to ribosomes. Seems to function along with eIF-2. The chain is Probable translation initiation factor IF-2 from Natronomonas pharaonis (strain ATCC 35678 / DSM 2160 / CIP 103997 / JCM 8858 / NBRC 14720 / NCIMB 2260 / Gabara) (Halobacterium pharaonis).